Reading from the N-terminus, the 143-residue chain is MAAPRRGKASSTVLSSLPLQMLLCLSGTYYALYFLATLLLLVYKSQVFTYPHSCLVLDLTLLFLMGILEAIRLYFGTTGNLMEAEVPLAASLVLTVGSALLSAYFLLWQTLVLRADSALGAPLLALHGLEAVLQVVAIAAFVS.

The next 4 helical transmembrane spans lie at 22–42, 47–67, 88–108, and 122–142; these read LLCLSGTYYALYFLATLLLLV, VFTYPHSCLVLDLTLLFLMGI, LAASLVLTVGSALLSAYFLLW, and PLLALHGLEAVLQVVAIAAFV.

The protein resides in the membrane. Its subcellular location is the cell projection. It localises to the cilium. This is Transmembrane protein 80 (TMEM80) from Bos taurus (Bovine).